Consider the following 261-residue polypeptide: Indole-3-glycerol phosphate synthase (261 aa).

It belongs to the TrpC family.

The catalysed reaction is 1-(2-carboxyphenylamino)-1-deoxy-D-ribulose 5-phosphate + H(+) = (1S,2R)-1-C-(indol-3-yl)glycerol 3-phosphate + CO2 + H2O. It participates in amino-acid biosynthesis; L-tryptophan biosynthesis; L-tryptophan from chorismate: step 4/5. This Burkholderia ambifaria (strain MC40-6) protein is Indole-3-glycerol phosphate synthase.